Here is a 498-residue protein sequence, read N- to C-terminus: Acetylcholine receptor subunit alpha-type acr-16 (498 aa).

Residues 1–19 (MSVCTLLISCAILAAPTLG) form the signal peptide. Residues 20 to 230 (SLQERRLYED…FYLHMRRRTL (211 aa)) lie on the Extracellular side of the membrane. N-linked (GlcNAc...) asparagine glycosylation is found at asparagine 43 and asparagine 93. Intrachain disulfides connect cysteine 147–cysteine 161 and cysteine 211–cysteine 212. 3 helical membrane passes run 231–252 (YYGF…LGFT), 261–279 (ITLQ…SIVS), and 295–314 (FFTC…VYVL). The Cytoplasmic segment spans residues 315 to 472 (NLHYRTPETH…WKFAAMVVDR (158 aa)). A helical membrane pass occupies residues 473–493 (LCLYVFTIFIIVSTIGIFWSA).

The protein belongs to the ligand-gated ion channel (TC 1.A.9) family. Acetylcholine receptor (TC 1.A.9.1) subfamily. Expressed in the body wall muscle.

It is found in the postsynaptic cell membrane. The protein resides in the cell membrane. In terms of biological role, after binding acetylcholine, the AChR responds by an extensive change in conformation that affects all subunits and leads to opening of an ion-conducting channel across the plasma membrane. A subunit of the levamisole-insensitive nicotinic receptor. This is Acetylcholine receptor subunit alpha-type acr-16 (acr-16) from Caenorhabditis elegans.